The primary structure comprises 195 residues: Molybdenum cofactor guanylyltransferase (195 aa).

GTP is bound by residues 10-12 (LAG), K23, N51, D69, and D99. Residue D99 participates in Mg(2+) binding.

It belongs to the MobA family. As to quaternary structure, monomer. It depends on Mg(2+) as a cofactor.

The protein localises to the cytoplasm. The catalysed reaction is Mo-molybdopterin + GTP + H(+) = Mo-molybdopterin guanine dinucleotide + diphosphate. In terms of biological role, transfers a GMP moiety from GTP to Mo-molybdopterin (Mo-MPT) cofactor (Moco or molybdenum cofactor) to form Mo-molybdopterin guanine dinucleotide (Mo-MGD) cofactor. The polypeptide is Molybdenum cofactor guanylyltransferase (Histophilus somni (strain 2336) (Haemophilus somnus)).